The sequence spans 365 residues: Cobalt-precorrin-5B C(1)-methyltransferase (365 aa).

This sequence belongs to the CbiD family.

It carries out the reaction Co-precorrin-5B + S-adenosyl-L-methionine = Co-precorrin-6A + S-adenosyl-L-homocysteine. It functions in the pathway cofactor biosynthesis; adenosylcobalamin biosynthesis; cob(II)yrinate a,c-diamide from sirohydrochlorin (anaerobic route): step 6/10. Its function is as follows. Catalyzes the methylation of C-1 in cobalt-precorrin-5B to form cobalt-precorrin-6A. This chain is Cobalt-precorrin-5B C(1)-methyltransferase, found in Paraburkholderia phytofirmans (strain DSM 17436 / LMG 22146 / PsJN) (Burkholderia phytofirmans).